The primary structure comprises 245 residues: NAD(P)H-quinone oxidoreductase subunit K (245 aa).

[4Fe-4S] cluster contacts are provided by Cys-58, Cys-59, Cys-123, and Cys-154.

It belongs to the complex I 20 kDa subunit family. As to quaternary structure, NDH-1 can be composed of about 15 different subunits; different subcomplexes with different compositions have been identified which probably have different functions. The cofactor is [4Fe-4S] cluster.

It is found in the cellular thylakoid membrane. It carries out the reaction a plastoquinone + NADH + (n+1) H(+)(in) = a plastoquinol + NAD(+) + n H(+)(out). It catalyses the reaction a plastoquinone + NADPH + (n+1) H(+)(in) = a plastoquinol + NADP(+) + n H(+)(out). NDH-1 shuttles electrons from an unknown electron donor, via FMN and iron-sulfur (Fe-S) centers, to quinones in the respiratory and/or the photosynthetic chain. The immediate electron acceptor for the enzyme in this species is believed to be plastoquinone. Couples the redox reaction to proton translocation, and thus conserves the redox energy in a proton gradient. Cyanobacterial NDH-1 also plays a role in inorganic carbon-concentration. In Nostoc sp. (strain PCC 7120 / SAG 25.82 / UTEX 2576), this protein is NAD(P)H-quinone oxidoreductase subunit K.